A 506-amino-acid polypeptide reads, in one-letter code: Phase 2 flagellin (506 aa).

It belongs to the bacterial flagellin family.

The protein localises to the secreted. The protein resides in the bacterial flagellum. Functionally, flagellin is the subunit protein which polymerizes to form the filaments of bacterial flagella. This Salmonella typhimurium (strain LT2 / SGSC1412 / ATCC 700720) protein is Phase 2 flagellin (fljB).